A 1186-amino-acid polypeptide reads, in one-letter code: Partner and localizer of BRCA2 (1186 aa).

The tract at residues 1-160 is required for its oligomerization and is important for its focal concentration at DNA damage sites; that stretch reads MDEPPGKPLS…QKRTFISQER (160 aa). The tract at residues 1–200 is interaction with RAD51; sequence MDEPPGKPLS…PVTEIRTHLL (200 aa). The interaction with BRCA1 stretch occupies residues 1-319; sequence MDEPPGKPLS…SKSGQLPTSS (319 aa). The tract at residues 1-579 is DNA-binding (with the preference D loop &gt; dsDNA &gt; ssDNA); it reads MDEPPGKPLS…EDSLSWSNSA (579 aa). Residues 9–41 adopt a coiled-coil conformation; that stretch reads LSCEEKEKLKEKLAFLKREYSKTLARLQRAQRA. Disordered regions lie at residues 52–72 and 95–157; these read VEEQDCLSQQDLSPQLKHSEP and KTSI…TFIS. Over residues 120 to 141 the composition is skewed to basic and acidic residues; the sequence is RTDDTQEHFPHRVSDPSGEQKQ. Over residues 143–152 the composition is skewed to basic residues; sequence LPSRRKKQQK. A phosphoserine mark is found at Ser-172 and Ser-190. The segment at 252-273 is disordered; it reads TLSDSGSSQHLEHIPPKGSSEL. Phosphoserine is present on Ser-285. Residues 346–365 are disordered; it reads KEQNQTEKSLKSPSDTLDGR. Residues Ser-376 and Ser-387 each carry the phosphoserine modification. The chAM (Chromatin-association motif); required for chromatin association, mediates nucleosome association stretch occupies residues 395 to 446; the sequence is SCTVPEGLLFPAEYYVRTTRSMSNCQRKVAVEAVIQSHLDVKKKGFKNKNKD. The interval 440 to 525 is disordered; the sequence is FKNKNKDASK…RKSACTPASD (86 aa). Ser-454 is modified (phosphoserine). Residues 467 to 488 are compositionally biased toward polar residues; the sequence is GTCTGQPSSRTSQKLLSLTKVS. The residue at position 660 (Ser-660) is a Phosphoserine. 2 disordered regions span residues 679 to 698 and 774 to 798; these read PGKSHPKRPNSQSQHTKTGL and KQFDSSGSPAKPHTTLQVSGRQGQP. A compositionally biased stretch (polar residues) spans 687-698; that stretch reads PNSQSQHTKTGL. The segment at 775–1186 is required for interaction with POLH and POLH DNA synthesis stimulation; the sequence is QFDSSGSPAK…DGNIFVYHYS (412 aa). A Phosphoserine modification is found at Ser-781. The interaction with RAD51, BRCA2 and POLH stretch occupies residues 853 to 1186; the sequence is GNLQLVSELK…DGNIFVYHYS (334 aa). WD repeat units follow at residues 854 to 915, 917 to 961, 962 to 1009, 1010 to 1052, 1058 to 1109, 1115 to 1153, and 1155 to 1186; these read NLQL…WHFA, VPVL…QVLL, KSGN…LMPP, EETI…MHID, SVCH…MLYC, AGRFLEGDVKDHCAAAILTSGTIAIWDLLLGQCTALLPP, and SDQHWSFVKWSGTDSHLLAGQKDGNIFVYHYS.

In terms of assembly, homooligomer; dissociated upon DNA damage thus allowing association with BRCA1. Oligomerization is essential for its focal accumulation at DNA breaks. Part of a BRCA complex containing BRCA1, BRCA2 and PALB2. Interacts with BRCA1 and this interaction is essential for its function in HRR. Interacts with RAD51AP1 and MORF4L1/MRG15. Component of the homologous recombination repair (HR) complex composed of ERCC5/XPG, BRCA2, PALB2, DSS1 and RAD51. Within the complex, interacts with ERCC5/XPG and BRCA2. Interacts with BRCA2, RAD51C, RAD51 and XRCC3; the interactions are direct and it may serve as a scaffold for a HR complex containing PALB2, BRCA2, RAD51C, RAD51 and XRCC3. Interacts with POLH; the interaction is direct.

It localises to the nucleus. In terms of biological role, plays a critical role in homologous recombination repair (HRR) through its ability to recruit BRCA2 and RAD51 to DNA breaks. Strongly stimulates the DNA strand-invasion activity of RAD51, stabilizes the nucleoprotein filament against a disruptive BRC3-BRC4 polypeptide and helps RAD51 to overcome the suppressive effect of replication protein A (RPA). Functionally cooperates with RAD51AP1 in promoting of D-loop formation by RAD51. Serves as the molecular scaffold in the formation of the BRCA1-PALB2-BRCA2 complex which is essential for homologous recombination. Via its WD repeats is proposed to scaffold a HR complex containing RAD51C and BRCA2 which is thought to play a role in HR-mediated DNA repair. Essential partner of BRCA2 that promotes the localization and stability of BRCA2. Also enables its recombinational repair and checkpoint functions of BRCA2. May act by promoting stable association of BRCA2 with nuclear structures, allowing BRCA2 to escape the effects of proteasome-mediated degradation. Binds DNA with high affinity for D loop, which comprises single-stranded, double-stranded and branched DNA structures. May play a role in the extension step after strand invasion at replication-dependent DNA double-strand breaks; together with BRCA2 is involved in both POLH localization at collapsed replication forks and DNA polymerization activity. This Homo sapiens (Human) protein is Partner and localizer of BRCA2 (PALB2).